Reading from the N-terminus, the 1651-residue chain is Vitellogenin-6 (1651 aa).

An N-terminal signal peptide occupies residues 1-15 (MKFFIALALLGAALA). One can recognise a Vitellogenin domain in the interval 34–716 (FRAGREYRYL…TTESVLPTEM (683 aa)). Residues Asn-252 and Asn-1288 are each glycosylated (N-linked (GlcNAc...) asparagine). Residues 1340-1515 (ANCVVKSTKI…SYLYKDSKCN (176 aa)) enclose the VWFD domain. 2 disulfide bridges follow: Cys-1342-Cys-1479 and Cys-1364-Cys-1514. Positions 1527 to 1556 (FQRIEKNQEEEKDQEMNYEESRREQDDEPT) are disordered.

Synthesized in Caenorhabditis only by 32 cells building the intestine of adult hermaphroditic individuals; they are cotranslationally secreted into the body cavity and subsequently taken up by the gonad.

Its subcellular location is the secreted. Functionally, precursor of the egg-yolk proteins that are sources of nutrients during embryonic development. May play a role in cholesterol uptake. May be involved in thermotolerance. In Caenorhabditis elegans, this protein is Vitellogenin-6 (vit-6).